The sequence spans 507 residues: Dihydrolipoyllysine-residue acetyltransferase component of pyruvate dehydrogenase complex, mitochondrial (507 aa).

Residues 77–153 form the Lipoyl-binding domain; that stretch reads HNRVALPALS…PIGKLLCIIV (77 aa). Lys118 is subject to N6-lipoyllysine. Disordered stretches follow at residues 168-223 and 248-270; these read DGAS…VSAS and RILA…TQAV. The Peripheral subunit-binding (PSBD) domain maps to 221–258; that stretch reads SASPFAKKLAAENGLDLSGVSGSGPGGRILASDLSQAP. Catalysis depends on residues His480 and Asp484.

Belongs to the 2-oxoacid dehydrogenase family. The cofactor is (R)-lipoate.

It is found in the mitochondrion matrix. The catalysed reaction is N(6)-[(R)-dihydrolipoyl]-L-lysyl-[protein] + acetyl-CoA = N(6)-[(R)-S(8)-acetyldihydrolipoyl]-L-lysyl-[protein] + CoA. The pyruvate dehydrogenase complex catalyzes the overall conversion of pyruvate to acetyl-CoA and CO(2). It contains multiple copies of three enzymatic components: pyruvate dehydrogenase (E1), dihydrolipoamide acetyltransferase (E2) and lipoamide dehydrogenase (E3). The chain is Dihydrolipoyllysine-residue acetyltransferase component of pyruvate dehydrogenase complex, mitochondrial from Caenorhabditis elegans.